The primary structure comprises 302 residues: Ribosomal protein L11 methyltransferase (302 aa).

S-adenosyl-L-methionine contacts are provided by Thr148, Gly169, Asp191, and Asn237.

Belongs to the methyltransferase superfamily. PrmA family.

The protein resides in the cytoplasm. The enzyme catalyses L-lysyl-[protein] + 3 S-adenosyl-L-methionine = N(6),N(6),N(6)-trimethyl-L-lysyl-[protein] + 3 S-adenosyl-L-homocysteine + 3 H(+). Its function is as follows. Methylates ribosomal protein L11. In Desulfosudis oleivorans (strain DSM 6200 / JCM 39069 / Hxd3) (Desulfococcus oleovorans), this protein is Ribosomal protein L11 methyltransferase.